A 398-amino-acid polypeptide reads, in one-letter code: Transcription factor kk1f (398 aa).

Residues 1–28 are disordered; the sequence is MTFVETVAVPDNEERPSAGHNRPVADST. A bZIP domain is found at 31 to 62; it reads PNAREMKVQNRVAQRTHHRRLKTKLEVLRERL. The basic motif stretch occupies residues 34–50; sequence REMKVQNRVAQRTHHRR. Positions 51–58 are leucine-zipper; it reads LKTKLEVL.

Belongs to the bZIP family.

It localises to the nucleus. The protein operates within secondary metabolite biosynthesis. Its function is as follows. Transcription factor; part of the gene cluster that mediates the biosynthesis of KK-1, a novel cyclic depsipeptide with 10 residues which is a promising active compound with high activity against many plant pathogens, especially Botrytis cinerea. Positively regulates the expression of all the genes from the KK-1 biosynthesis gene cluster. The sequence is that of Transcription factor kk1f from Curvularia clavata.